The chain runs to 590 residues: MVHVSSSHGAKDGSEEAYDYRGNPPDKSKTGGWLGAGLILGSELSERICVMGISMNLVTYLVGDLHISSAKSATIVTNFMGTLNLLGLLGGFLADAKLGRYKMVAISASVTALGVLLLTVATTISSMRPPICDDFRRLHHQCIEANGHQLALLYVALYTIALGGGGIKSNVSGFGSDQFDTSDPKEEKQMIFFFNRFYFSISVGSLFAVIALVYVQDNVGRGWGYGISAATMVVAAIVLLCGTKRYRFKKPKGSPFTTIWRVGFLAWKKRKESYPAHPSLLNGYDNTTVPHTEMLKCLDKAAISKNESSPSSKDFEEKDPWIVSTVTQVEEVKLVMKLVPIWATNILFWTIYSQMTTFTVEQATFMDRKLGSFTVPAGSYSAFLILTILLFTSLNERVFVPLTRRLTKKPQGITSLQRIGVGLVFSMAAMAVAAVIENARREAAVNNDKKISAFWLVPQYFLVGAGEAFAYVGQLEFFIREAPERMKSMSTGLFLSTISMGFFVSSLLVSLVDRVTDKSWLRSNLNKARLNYFYWLLVVLGALNFLIFIVFAMKHQYKADVITVVVTDDDSVEKEVTKKESSEFELKDIP.

A disordered region spans residues 1 to 24 (MVHVSSSHGAKDGSEEAYDYRGNP). 12 helical membrane-spanning segments follow: residues 48–68 (ICVMGISMNLVTYLVGDLHIS), 73–93 (ATIVTNFMGTLNLLGLLGGFL), 104–124 (VAISASVTALGVLLLTVATTI), 147–167 (GHQLALLYVALYTIALGGGGI), 197–217 (FYFSISVGSLFAVIALVYVQD), 222–242 (GWGYGISAATMVVAAIVLLCG), 332–352 (VKLVMKLVPIWATNILFWTIY), 371–391 (GSFTVPAGSYSAFLILTILLF), 419–439 (IGVGLVFSMAAMAVAAVIENA), 453–473 (AFWLVPQYFLVGAGEAFAYVG), 492–512 (GLFLSTISMGFFVSSLLVSLV), and 533–553 (FYWLLVVLGALNFLIFIVFAM).

Belongs to the major facilitator superfamily. Proton-dependent oligopeptide transporter (POT/PTR) (TC 2.A.17) family. As to expression, expressed in leaves, flowers and siliques. Detected in leaves.

Its subcellular location is the membrane. Functionally, low-affinity nitrate transporter. This Arabidopsis thaliana (Mouse-ear cress) protein is Protein NRT1/ PTR FAMILY 6.4 (NPF6.4).